Consider the following 222-residue polypeptide: Charged multivesicular body protein 2a (222 aa).

N-acetylmethionine is present on Met1. Residues 12-53 (EELLRQNQRALNRAMRELDRERQKLETQEKKIIADIKKMAKQ) are a coiled coil. The tract at residues 56–222 (MDAVRIMAKD…EERLKNLRRD (167 aa)) is interaction with VPS4B. The segment covering 179–188 (LSNLPSTGGS) has biased composition (polar residues). The disordered stretch occupies residues 179-198 (LSNLPSTGGSLSVAAGGKKA). At Ser184 the chain carries Phosphoserine. Phosphothreonine is present on Thr185. A phosphoserine mark is found at Ser188, Ser190, and Ser203. A coiled-coil region spans residues 195–222 (GKKAEATASALADADADLEERLKNLRRD). Residues 210-220 (ADLEERLKNLR) carry the MIT-interacting motif motif. The interaction with VTA1 stretch occupies residues 217–222 (KNLRRD).

Belongs to the SNF7 family. Probable core component of the endosomal sorting required for transport complex III (ESCRT-III). ESCRT-III components are thought to multimerize to form a flat lattice on the perimeter membrane of the endosome. Several assembly forms of ESCRT-III may exist that interact and act sequentially. In vitro, heteromerizes with CHMP3 (but not CHMP4) to form helical tubular structures that expose membrane-interacting sites on the outside whereas VPS4B can associate on the inside of the tubule. Interacts with CHMP1B, CHMP2B, CHMP3, CHMP4A, CHMP4B, CHMP4C and CHMP5. Interacts with VPS4A; the interaction is direct. Interacts with VPS4B; the interaction is direct. Interacts with MITD1. Interacts with VTA1; the interaction probably involves the open conformation of CHMP2A. Post-translationally, ISGylated in a CHMP5-dependent manner. Isgylation weakens and inhibits its interactions with VPS4A and VTA1 respectively. Widely expressed. Highly expressed in brain, heart, liver and kidney.

The protein resides in the late endosome membrane. It is found in the cytoplasm. It localises to the nucleus envelope. Functionally, probable core component of the endosomal sorting required for transport complex III (ESCRT-III) which is involved in multivesicular bodies (MVBs) formation and sorting of endosomal cargo proteins into MVBs. MVBs contain intraluminal vesicles (ILVs) that are generated by invagination and scission from the limiting membrane of the endosome and mostly are delivered to lysosomes enabling degradation of membrane proteins, such as stimulated growth factor receptors, lysosomal enzymes and lipids. The MVB pathway appears to require the sequential function of ESCRT-O, -I,-II and -III complexes. ESCRT-III proteins mostly dissociate from the invaginating membrane before the ILV is released. The ESCRT machinery also functions in topologically equivalent membrane fission events, such as the terminal stages of cytokinesis. Together with SPAST, the ESCRT-III complex promotes nuclear envelope sealing and mitotic spindle disassembly during late anaphase. Recruited to the reforming nuclear envelope (NE) during anaphase by LEMD2. ESCRT-III proteins are believed to mediate the necessary vesicle extrusion and/or membrane fission activities, possibly in conjunction with the AAA ATPase VPS4. In Mus musculus (Mouse), this protein is Charged multivesicular body protein 2a (Chmp2a).